We begin with the raw amino-acid sequence, 1048 residues long: Anguibactin system regulator (1048 aa).

The Carrier domain occupies 965-1039 (PIITASEDRV…AFAIIMDRCR (75 aa)).

This sequence belongs to the ATP-dependent AMP-binding enzyme family.

It participates in siderophore biosynthesis; anguibactin biosynthesis. Its function is as follows. Bifunctional protein that plays an essential role in virulence. Plays a role in both the production of the siderophore anguibactin and the regulation of iron transport genes. This Vibrio anguillarum (Listonella anguillarum) protein is Anguibactin system regulator (angR).